The primary structure comprises 411 residues: Lycopene beta cyclase (411 aa).

Residue 4 to 32 participates in NAD(+) binding; sequence ALVIGSGPAGLAIAAELAQRGLKVQGLSP.

Belongs to the lycopene cyclase family. It depends on FAD as a cofactor.

It catalyses the reaction a carotenoid psi-end group = a carotenoid beta-end derivative. The enzyme catalyses all-trans-lycopene = gamma-carotene. It carries out the reaction gamma-carotene = all-trans-beta-carotene. The catalysed reaction is all-trans-neurosporene = beta-zeacarotene. It functions in the pathway carotenoid biosynthesis; beta-carotene biosynthesis. It participates in carotenoid biosynthesis; beta-zeacarotene biosynthesis. Its activity is regulated as follows. Inhibited by the bleaching herbicide 2-(4-methylphenoxy)triethylamine hydrochloride (MPTA). Functionally, catalyzes the double cyclization reaction which converts lycopene to beta-carotene. It also converts neurosporene to the monocyclic beta-zeacarotene but does not cyclize zeta-carotene. The sequence is that of Lycopene beta cyclase from Synechococcus elongatus (strain ATCC 33912 / PCC 7942 / FACHB-805) (Anacystis nidulans R2).